We begin with the raw amino-acid sequence, 153 residues long: Histone H2B.8 (153 aa).

Composition is skewed to basic and acidic residues over residues 1–28 (MAPK…EKAP) and 36–53 (EKRL…EGKK). The interval 1-61 (MAPKAEKKPA…KKAGRKKAKK (61 aa)) is disordered. K7 and K37 each carry N6-acetyllysine. A Glycyl lysine isopeptide (Lys-Gly) (interchain with G-Cter in ubiquitin) cross-link involves residue K149.

This sequence belongs to the histone H2B family. In terms of assembly, the nucleosome is a histone octamer containing two molecules each of H2A, H2B, H3 and H4 assembled in one H3-H4 heterotetramer and two H2A-H2B heterodimers. The octamer wraps approximately 147 bp of DNA. Can be acetylated to form H2BK6ac and H2BK33ac. In terms of processing, monoubiquitinated by BRE1 to form H2BK143ub1 and deubiquitinated by UBP26. Required for heterochromatic histone H3 di- and trimethylation at H3K4me. May give a specific tag for epigenetic transcriptional activation.

It is found in the nucleus. The protein localises to the chromosome. In terms of biological role, core component of nucleosome. Nucleosomes wrap and compact DNA into chromatin, limiting DNA accessibility to the cellular machineries which require DNA as a template. Histones thereby play a central role in transcription regulation, DNA repair, DNA replication and chromosomal stability. DNA accessibility is regulated via a complex set of post-translational modifications of histones, also called histone code, and nucleosome remodeling. This is Histone H2B.8 (H2B.8) from Oryza sativa subsp. indica (Rice).